Reading from the N-terminus, the 82-residue chain is MDLLLAIVLIVLAFLGGALGGMYLVRKQIEKEFADNPRLNAEAVRTLLSANGQKPSEAKVQQVYHQIIRQQKAALANNKKKK.

Residues 5-25 (LAIVLIVLAFLGGALGGMYLV) form a helical membrane-spanning segment.

This sequence belongs to the UPF0154 family.

The protein localises to the cell membrane. The protein is UPF0154 protein SPD_1662 of Streptococcus pneumoniae serotype 2 (strain D39 / NCTC 7466).